Consider the following 254-residue polypeptide: Small ribosomal subunit protein uS2 (254 aa).

It belongs to the universal ribosomal protein uS2 family.

This is Small ribosomal subunit protein uS2 from Borrelia hermsii (strain HS1 / DAH).